We begin with the raw amino-acid sequence, 388 residues long: UTP--glucose-1-phosphate uridylyltransferase (388 aa).

Residue Asp118 coordinates Mg(2+).

It belongs to the CugP-type UDP-glucose pyrophosphorylase family. Mg(2+) serves as cofactor.

It carries out the reaction alpha-D-glucose 1-phosphate + UTP + H(+) = UDP-alpha-D-glucose + diphosphate. Functionally, catalyzes the formation of UDP-glucose, from UTP and glucose 1-phosphate. Is highly specific since it cannot use other NTPs such as dTTP, CTP, ATP, and GTP, and other sugar-1P such as GlcNAc-1P, Gal-1P, and Man-1P, as substrates. Has probably a central and essential role as the substrate supplier for galactolipid synthesis; galactolipids are major constituents of the photosynthetic thylakoid membrane and important for photosynthetic activity. In Synechocystis sp. (strain ATCC 27184 / PCC 6803 / Kazusa), this protein is UTP--glucose-1-phosphate uridylyltransferase.